Consider the following 215-residue polypeptide: Transmembrane protein 267 (215 aa).

Helical transmembrane passes span 77 to 97, 114 to 134, and 178 to 198; these read FCEVALAGFFASIIDLDHFFL, PLHCSTLIPVVALALKFLMQL, and YWLYVVITASLPSVCSLIMCL.

It localises to the membrane. The protein is Transmembrane protein 267 (tmem267) of Xenopus laevis (African clawed frog).